Consider the following 200-residue polypeptide: Transgelin (200 aa).

Residue Ser2 is modified to N-acetylserine. Ser11 bears the Phosphoserine mark. The Calponin-homology (CH) domain occupies 26-136 (PEAIQNIKIW…QTLKSLSRYA (111 aa)). The interval 144–168 (FPVLGPQLSTKKPRPPVKSKPKHLQ) is disordered. The interval 151 to 164 (LSTKKPRPPVKSKP) is interaction with SH3 domain of ABP1. A compositionally biased stretch (basic residues) spans 154 to 165 (KKPRPPVKSKPK).

Binds to actin. Interacts with ABP1.

It localises to the cytoplasm. The protein localises to the cytoskeleton. Its subcellular location is the actin patch. In terms of biological role, has actin-binding and actin-bundling activity. Stabilizes actin filaments against disassembly. This chain is Transgelin (SCP1), found in Saccharomyces cerevisiae (strain ATCC 204508 / S288c) (Baker's yeast).